We begin with the raw amino-acid sequence, 194 residues long: dCTP deaminase (194 aa).

Residues 110–115 (RSSLAR), Asp-128, 136–138 (VLE), Tyr-171, Lys-178, and Gln-182 each bind dCTP. Glu-138 functions as the Proton donor/acceptor in the catalytic mechanism.

Belongs to the dCTP deaminase family. As to quaternary structure, homotrimer.

It catalyses the reaction dCTP + H2O + H(+) = dUTP + NH4(+). The protein operates within pyrimidine metabolism; dUMP biosynthesis; dUMP from dCTP (dUTP route): step 1/2. Its function is as follows. Catalyzes the deamination of dCTP to dUTP. The protein is dCTP deaminase of Mannheimia succiniciproducens (strain KCTC 0769BP / MBEL55E).